Consider the following 1562-residue polypeptide: NAC-alpha domain-containing protein 1 (1562 aa).

A compositionally biased stretch (low complexity) spans 1–13 (MPGEAARAELLLP). Disordered regions lie at residues 1 to 24 (MPGEAARAELLLPEADRPGPRTDL), 56 to 110 (FLPS…TEAP), 131 to 226 (SPRA…ADGD), 249 to 288 (SGWGLSPQGSMVDERELHPAGTPEPPSSESSLSADSSSSW), 327 to 365 (TPLSPEEEEEEAVADPDPGGDLAGEGEEDSTSASFLQSL), 381 to 458 (RDDT…GAYL), 503 to 941 (TPQA…EPLA), and 953 to 1423 (GCAP…AMSK). The segment covering 195–208 (GDARDSEAELRDEL) has biased composition (basic and acidic residues). The span at 275 to 287 (SSESSLSADSSSS) shows a compositional bias: low complexity. Residues 331–340 (PEEEEEEAVA) show a composition bias toward acidic residues. The span at 385 to 397 (SAASSDSDSASYA) shows a compositional bias: low complexity. Composition is skewed to polar residues over residues 449-458 (PQTSDRGAYL) and 550-564 (QEETSLTLCPDSPQN). Residues 992–1007 (PAALDQVQQDDPQPAA) show a composition bias toward low complexity. Residues 1048–1074 (PGREACLEARAHTGDGAKPDSPQKETL) show a composition bias toward basic and acidic residues. The residue at position 1068 (Ser1068) is a Phosphoserine. Low complexity-rich tracts occupy residues 1172-1182 (APTSAPTSQQP) and 1231-1241 (APGTLAGAALP). Positions 1254 to 1264 (PQEDSVEDEEP) are enriched in acidic residues. 3 stretches are compositionally biased toward low complexity: residues 1265–1284 (PGSLGLPPPQAGVQPAAAAV), 1298–1308 (SLSPHSPLLSP), and 1335–1344 (QSPAGPQGLS). A compositionally biased stretch (acidic residues) spans 1348-1357 (QQEDEDSLEE). Ser1354 carries the post-translational modification Phosphoserine. One can recognise an NAC-A/B domain in the interval 1411-1476 (SRSEKKARKA…AKIEDLSQQV (66 aa)).

The protein belongs to the NAC-alpha family.

Its subcellular location is the cytoplasm. It localises to the nucleus. Its function is as follows. May prevent inappropriate targeting of non-secretory polypeptides to the endoplasmic reticulum (ER). May bind to nascent polypeptide chains as they emerge from the ribosome and block their interaction with the signal recognition particle (SRP), which normally targets nascent secretory peptides to the ER. May also reduce the inherent affinity of ribosomes for protein translocation sites in the ER membrane (M sites). This Homo sapiens (Human) protein is NAC-alpha domain-containing protein 1 (NACAD).